The following is an 81-amino-acid chain: MAHAVKIYDTCIGCTQCVRACPTDVLEMIPWDGCKANQIASAPRTEDCVGCKRCESRCPTDFLSVRVYLGNETTRSMGLSY.

2 consecutive 4Fe-4S ferredoxin-type domains span residues 2 to 31 (AHAVKIYDTCIGCTQCVRACPTDVLEMIPW) and 39 to 68 (IASAPRTEDCVGCKRCESRCPTDFLSVRVY). [4Fe-4S] cluster contacts are provided by C11, C14, C17, C21, C48, C51, C54, and C58.

As to quaternary structure, the eukaryotic PSI reaction center is composed of at least 11 subunits. It depends on [4Fe-4S] cluster as a cofactor.

It localises to the plastid. It is found in the chloroplast thylakoid membrane. It carries out the reaction reduced [plastocyanin] + hnu + oxidized [2Fe-2S]-[ferredoxin] = oxidized [plastocyanin] + reduced [2Fe-2S]-[ferredoxin]. Its function is as follows. Apoprotein for the two 4Fe-4S centers FA and FB of photosystem I (PSI); essential for photochemical activity. FB is the terminal electron acceptor of PSI, donating electrons to ferredoxin. The C-terminus interacts with PsaA/B/D and helps assemble the protein into the PSI complex. Required for binding of PsaD and PsaE to PSI. PSI is a plastocyanin-ferredoxin oxidoreductase, converting photonic excitation into a charge separation, which transfers an electron from the donor P700 chlorophyll pair to the spectroscopically characterized acceptors A0, A1, FX, FA and FB in turn. The sequence is that of Photosystem I iron-sulfur center from Marchantia polymorpha (Common liverwort).